Here is a 304-residue protein sequence, read N- to C-terminus: Ribosomal protein L11 methyltransferase (304 aa).

Positions 156, 177, 199, and 240 each coordinate S-adenosyl-L-methionine.

Belongs to the methyltransferase superfamily. PrmA family.

The protein resides in the cytoplasm. It carries out the reaction L-lysyl-[protein] + 3 S-adenosyl-L-methionine = N(6),N(6),N(6)-trimethyl-L-lysyl-[protein] + 3 S-adenosyl-L-homocysteine + 3 H(+). Methylates ribosomal protein L11. This Symbiobacterium thermophilum (strain DSM 24528 / JCM 14929 / IAM 14863 / T) protein is Ribosomal protein L11 methyltransferase.